The chain runs to 213 residues: A-type ATP synthase subunit D (213 aa).

The protein belongs to the V-ATPase D subunit family. Has multiple subunits with at least A(3), B(3), C, D, E, F, H, I and proteolipid K(x).

The protein resides in the cell membrane. Functionally, component of the A-type ATP synthase that produces ATP from ADP in the presence of a proton gradient across the membrane. This Saccharolobus islandicus (strain L.S.2.15 / Lassen #1) (Sulfolobus islandicus) protein is A-type ATP synthase subunit D.